The following is a 185-amino-acid chain: Potassium-transporting ATPase KdpC subunit 2 (185 aa).

Residues 8-28 (LGLVLIMFVLCGFIFPLTVTA) traverse the membrane as a helical segment.

This sequence belongs to the KdpC family. As to quaternary structure, the system is composed of three essential subunits: KdpA, KdpB and KdpC.

The protein localises to the cell membrane. Its subcellular location is the membrane raft. In terms of biological role, part of the high-affinity ATP-driven potassium transport (or Kdp) system, which catalyzes the hydrolysis of ATP coupled with the electrogenic transport of potassium into the cytoplasm. This subunit acts as a catalytic chaperone that increases the ATP-binding affinity of the ATP-hydrolyzing subunit KdpB by the formation of a transient KdpB/KdpC/ATP ternary complex. The chain is Potassium-transporting ATPase KdpC subunit 2 from Staphylococcus aureus (strain Mu50 / ATCC 700699).